The sequence spans 156 residues: SCP2 sterol-binding domain-containing protein 1 (156 aa).

Residues 44 to 156 (SFPVFQDIRL…ERVFKDWAKF (113 aa)) form the SCP2 domain.

This is SCP2 sterol-binding domain-containing protein 1 (SCP2D1) from Homo sapiens (Human).